Reading from the N-terminus, the 185-residue chain is Iodate reductase subunit IdrB (185 aa).

A signal peptide (tat-type signal) is located at residues M1 to A46. In terms of domain architecture, Rieske spans G69–A168. [2Fe-2S] cluster contacts are provided by C109, H111, C130, and H133.

Belongs to the AOX family. The iodate reductase (Idr) complex is composed of a molybdopterin-dependent iodate reductase (IdrA and IdrB subunits) and two associated peroxidases (IdrP1 and IdrP2). [2Fe-2S] cluster is required as a cofactor. In terms of processing, predicted to be exported by the Tat system. The position of the signal peptide cleavage has not been experimentally proven.

The protein localises to the periplasm. Involved in iodate respiration. May accept electrons from cytochrome c551, and catalyze the reduction of iodate (IO(3)(-)) to produce the chemically unstable intermediate hypoiodous acid (HIO). This intermediate then undergoes abiotic disproportionation to yield two molecules of iodide (I(-)) and one molecule of iodate. The resultant iodate subsequently cycles back into the reductive pathway. The initial reduction of iodate may inadvertently produce low levels of incidental toxic H(2)O(2), which is detoxified by IdrP1 and IdrP2. This is Iodate reductase subunit IdrB from Denitromonas iodatirespirans.